We begin with the raw amino-acid sequence, 838 residues long: V-type proton ATPase 116 kDa subunit a 1 (838 aa).

Residues 1–388 (MGELFRSEEM…DAYGIGTYRE (388 aa)) are Cytoplasmic-facing. The helical transmembrane segment at 389-407 (INPAPYTIITFPFLFAVMF) threads the bilayer. The Vacuolar portion of the chain corresponds to 408–409 (GD). A helical membrane pass occupies residues 410–426 (FGHGILMTLIAIWMVLR). Over 427 to 441 (ESRILSQKSDNEMFS) the chain is Cytoplasmic. Residues 442–471 (TVFSGRYIILLMGLFSTYTGLIYNDCFSKS) traverse the membrane as a helical segment. The Vacuolar segment spans residues 472-535 (LNMFGSSWSV…ANNKLAFLNS (64 aa)). A helical membrane pass occupies residues 536–555 (FKMKMSVILGIIHMLFGVML). The Cytoplasmic portion of the chain corresponds to 556-573 (SLLNHIYFKKPLNIYLGF). The chain crosses the membrane as a helical span at residues 574 to 594 (IPEMIFMSSLFGYLVILIFYK). Topologically, residues 595–639 (WTAYDAHTSKEAPSPLIHFINMFLFSYGDTSNKMLYRGQKGIQCF) are vacuolar. A helical transmembrane segment spans residues 640-659 (LVVVALLCVPWMLVAKPLVL). The Cytoplasmic segment spans residues 660 to 725 (RHQYLRRKHL…DTVVYQAIHT (66 aa)). A helical membrane pass occupies residues 726-750 (IEYCLGCISNTASYLRLWALSLAHA). Residues 751–771 (QLSEVLWTMVIHTGLSVRSLA) are Vacuolar-facing. A helical membrane pass occupies residues 772-810 (GGFGLVFIFAAFATLTVAILLVMEGLSAFLHALRLHWIE). Topologically, residues 811 to 838 (FQNKFYTGTGFKFLPFSFDPIREGKFDD) are cytoplasmic.

It belongs to the V-ATPase 116 kDa subunit family. As to quaternary structure, V-ATPase is a heteromultimeric enzyme made up of two complexes: the ATP-hydrolytic V1 complex and the proton translocation V0 complex. The V1 complex consists of three catalytic AB heterodimers that form a heterohexamer, three peripheral stalks each consisting of EG heterodimers, one central rotor including subunits D and F, and the regulatory subunits C and H. The proton translocation complex V0 consists of the proton transport subunit a, a ring of proteolipid subunits c9c'', rotary subunit d, subunits e and f, and two accessory subunits. In terms of tissue distribution, detected in brain (at protein level). Highest expression in brain, intermediate levels in kidney, and relatively low levels in bone and liver.

The protein localises to the cytoplasmic vesicle. It localises to the clathrin-coated vesicle membrane. It is found in the secretory vesicle. The protein resides in the synaptic vesicle membrane. Its subcellular location is the melanosome. Functionally, subunit of the V0 complex of vacuolar(H+)-ATPase (V-ATPase), a multisubunit enzyme composed of a peripheral complex (V1) that hydrolyzes ATP and a membrane integral complex (V0) that translocates protons. V-ATPase is responsible for acidifying and maintaining the pH of intracellular compartments and in some cell types, is targeted to the plasma membrane, where it is responsible for acidifying the extracellular environment. Required for assembly and activity of the vacuolar ATPase. This Gallus gallus (Chicken) protein is V-type proton ATPase 116 kDa subunit a 1 (ATP6V0A1).